Reading from the N-terminus, the 394-residue chain is MEMTEASKHTTTHEESEHVQNPEPDQVLSQRQLLQLNQKKWWISVLICLFLVLLGDSLVILLLNFFYVQDRREDNNQDLQYKGTWMQALIQNAAFPILIPLFFIFPSPKPNPETINTRFLSIRLILLYFSLGVLVAAHSKLYALGKLYSSYGFFMLISGSQLIFTLIFTAIINRFKFTRWIIISIVLILVSYAFGGPVFSGEPDENEHFYGIQAWLTFAASVAFALSLCLVQLSFEKLLVKTKRYGNKKVFRMVLEMQICVSSVASVVCLVGLFASGEYKELKGDSERFKKGETYYVLSLVGLALSWQVWAVGLIGLVLYVSSVFSNIVHMCASPLMAFIVVLAFDFIDDDFSWPRIGALIGSVLALGSYFYTLHKRNKKKMVEFNQSENNVEV.

The span at 1–20 (MEMTEASKHTTTHEESEHVQ) shows a compositional bias: basic and acidic residues. The interval 1–24 (MEMTEASKHTTTHEESEHVQNPEP) is disordered. At S29 the chain carries Phosphoserine. A run of 10 helical transmembrane segments spans residues 43–63 (ISVLICLFLVLLGDSLVILLL), 85–105 (WMQALIQNAAFPILIPLFFIF), 124–144 (LILLYFSLGVLVAAHSKLYAL), 152–172 (GFFMLISGSQLIFTLIFTAII), 180–200 (WIIISIVLILVSYAFGGPVFS), 211–231 (GIQAWLTFAASVAFALSLCLV), 254–274 (VLEMQICVSSVASVVCLVGLF), 301–321 (VGLALSWQVWAVGLIGLVLYV), 328–348 (IVHMCASPLMAFIVVLAFDFI), and 352–372 (FSWPRIGALIGSVLALGSYFY).

It belongs to the purine permeases (TC 2.A.7.14) family.

The protein resides in the membrane. The polypeptide is Probable purine permease 23 (PUP23) (Arabidopsis thaliana (Mouse-ear cress)).